A 993-amino-acid polypeptide reads, in one-letter code: Ephrin type-B receptor 3 (993 aa).

Positions 1–29 (MAGARPPPGLLPLLAPLLLPLLLPAGCWA) are cleaved as a signal peptide. Residues 30-554 (LEETLMDTKW…AQQLQEQLPL (525 aa)) are Extracellular-facing. Residues 31–209 (EETLMDTKWV…FYKKCASTTA (179 aa)) form the Eph LBD domain. Cysteine 73 and cysteine 191 are disulfide-bonded. Fibronectin type-III domains lie at 331–446 (VPSP…TNQA) and 447–540 (APSE…TTSE). N-linked (GlcNAc...) asparagine glycosylation is found at asparagine 343 and asparagine 440. The helical transmembrane segment at 555–575 (IVGSTVAGFVFMVVVVVIALV) threads the bilayer. The Cytoplasmic segment spans residues 576–993 (CLRKQRHGPD…QMNQTLPVQV (418 aa)). At tyrosine 609 the chain carries Phosphotyrosine; by autocatalysis. One can recognise a Protein kinase domain in the interval 628-891 (VKIEEVIGAG…QIVNTLDKLI (264 aa)). ATP-binding positions include 634–642 (IGAGEFGEV) and lysine 660. The Proton acceptor role is filled by aspartate 753. In terms of domain architecture, SAM spans 920 to 984 (TTFTTVGDWL…LCSIQDMRLQ (65 aa)). The PDZ-binding motif lies at 991-993 (VQV).

The protein belongs to the protein kinase superfamily. Tyr protein kinase family. Ephrin receptor subfamily. Heterotetramer upon binding of the ligand. The heterotetramer is composed of an ephrin dimer and a receptor dimer. Oligomerization is probably required to induce biological responses. Phosphorylated. Autophosphorylates upon ligand-binding. Autophosphorylation on Tyr-609 is required for interaction with SH2 domain-containing proteins. Post-translationally, ubiquitinated by RNF186, mainly through 'Lys-48' and 'Lys-63'-linked polyubiquitin chains. Expressed in cells of the retinal ganglion cell layer during retinal axon guidance to the optic disk. Expressed by Paneth and progenitor cells in the crypts of the intestinal epithelium (at protein level). Expressed in myogenic progenitor cells.

Its subcellular location is the cell membrane. It localises to the cell projection. The protein localises to the dendrite. It carries out the reaction L-tyrosyl-[protein] + ATP = O-phospho-L-tyrosyl-[protein] + ADP + H(+). Receptor tyrosine kinase which binds promiscuously transmembrane ephrin-B family ligands residing on adjacent cells, leading to contact-dependent bidirectional signaling into neighboring cells. The signaling pathway downstream of the receptor is referred to as forward signaling while the signaling pathway downstream of the ephrin ligand is referred to as reverse signaling. Generally has an overlapping and redundant function with EPHB2. Like EPHB2, functions in axon guidance during development regulating for instance the neurons forming the corpus callosum and the anterior commissure, 2 major interhemispheric connections between the temporal lobes of the cerebral cortex. In addition to its role in axon guidance also plays an important redundant role with other ephrin-B receptors in development and maturation of dendritic spines and the formation of excitatory synapses. Controls other aspects of development through regulation of cell migration and positioning. This includes angiogenesis, palate development and thymic epithelium development for instance. Forward and reverse signaling through the EFNB2/EPHB3 complex also regulate migration and adhesion of cells that tubularize the urethra and septate the cloaca. Finally, plays an important role in intestinal epithelium differentiation segregating progenitor from differentiated cells in the crypt. The sequence is that of Ephrin type-B receptor 3 (Ephb3) from Mus musculus (Mouse).